Consider the following 60-residue polypeptide: Large ribosomal subunit protein uL30 (60 aa).

It belongs to the universal ribosomal protein uL30 family. As to quaternary structure, part of the 50S ribosomal subunit.

This Limosilactobacillus reuteri (strain DSM 20016) (Lactobacillus reuteri) protein is Large ribosomal subunit protein uL30.